We begin with the raw amino-acid sequence, 626 residues long: Pheromone B alpha 3 receptor (626 aa).

Transmembrane regions (helical) follow at residues 8–28 (LFPTFAFLGFVLALVPLPWHL), 36–56 (CFFMVWTALGCLNQFVNSIVW), 70–90 (ISIRITMGLSVGLPASSLCII), 113–133 (IIIDALICVLFPLVYIAMQYI), 163–183 (IWPVLIGMVSATYSVLALIEF), 208–228 (LMALAMTEMCCTVPLGIFVIV), and 271–291 (ELTRWLAPVSAMLFFAYFGFA). Disordered regions lie at residues 363–409 (KQYT…SSPI), 481–509 (ATFTSANNDTDEPTSPALPDTPSSCSSSA), 524–549 (STTDVTRDTGSLPIRRSPAGPPRLPS), and 571–626 (QDVA…RASV). Over residues 376–391 (SSSGFSSSESTRFGSS) the composition is skewed to low complexity. The segment covering 574-606 (ATGTAAPTTTAPAPASTTIAPATTTATAPTTTA) has biased composition (low complexity).

The protein belongs to the G-protein coupled receptor 4 family.

The protein resides in the membrane. Functionally, receptor for the BAP3 pheromone, a prenylated mating factor. The protein is Pheromone B alpha 3 receptor (BAR3) of Schizophyllum commune (strain H4-8 / FGSC 9210) (Split gill fungus).